Consider the following 485-residue polypeptide: Protein nucleotidyltransferase YdiU (485 aa).

ATP is bound by residues G90, G92, R93, K113, D125, G126, R176, and R183. D252 (proton acceptor) is an active-site residue. Residues N253 and D262 each coordinate Mg(2+). D262 lines the ATP pocket.

This sequence belongs to the SELO family. The cofactor is Mg(2+). Mn(2+) serves as cofactor.

The enzyme catalyses L-seryl-[protein] + ATP = 3-O-(5'-adenylyl)-L-seryl-[protein] + diphosphate. The catalysed reaction is L-threonyl-[protein] + ATP = 3-O-(5'-adenylyl)-L-threonyl-[protein] + diphosphate. It carries out the reaction L-tyrosyl-[protein] + ATP = O-(5'-adenylyl)-L-tyrosyl-[protein] + diphosphate. It catalyses the reaction L-histidyl-[protein] + UTP = N(tele)-(5'-uridylyl)-L-histidyl-[protein] + diphosphate. The enzyme catalyses L-seryl-[protein] + UTP = O-(5'-uridylyl)-L-seryl-[protein] + diphosphate. The catalysed reaction is L-tyrosyl-[protein] + UTP = O-(5'-uridylyl)-L-tyrosyl-[protein] + diphosphate. Its function is as follows. Nucleotidyltransferase involved in the post-translational modification of proteins. It can catalyze the addition of adenosine monophosphate (AMP) or uridine monophosphate (UMP) to a protein, resulting in modifications known as AMPylation and UMPylation. The protein is Protein nucleotidyltransferase YdiU of Aliivibrio fischeri (strain MJ11) (Vibrio fischeri).